The primary structure comprises 381 residues: tRNA-specific 2-thiouridylase MnmA (381 aa).

ATP contacts are provided by residues 14–21 (AMSGGVDS) and M40. C108 acts as the Nucleophile in catalysis. A disulfide bridge links C108 with C205. G132 contributes to the ATP binding site. The interaction with tRNA stretch occupies residues 155-157 (KDQ). C205 functions as the Cysteine persulfide intermediate in the catalytic mechanism. The interaction with tRNA stretch occupies residues 309 to 310 (RY).

The protein belongs to the MnmA/TRMU family.

Its subcellular location is the cytoplasm. It carries out the reaction S-sulfanyl-L-cysteinyl-[protein] + uridine(34) in tRNA + AH2 + ATP = 2-thiouridine(34) in tRNA + L-cysteinyl-[protein] + A + AMP + diphosphate + H(+). Functionally, catalyzes the 2-thiolation of uridine at the wobble position (U34) of tRNA, leading to the formation of s(2)U34. The sequence is that of tRNA-specific 2-thiouridylase MnmA from Deinococcus geothermalis (strain DSM 11300 / CIP 105573 / AG-3a).